A 311-amino-acid polypeptide reads, in one-letter code: Malate dehydrogenase (311 aa).

Residues 7–13 (GAAGGIG) and aspartate 34 contribute to the NAD(+) site. Residues arginine 81 and arginine 87 each coordinate substrate. NAD(+) contacts are provided by residues asparagine 94 and 117-119 (ITN). Positions 119 and 153 each coordinate substrate. Histidine 177 acts as the Proton acceptor in catalysis. Methionine 227 is a binding site for NAD(+).

Belongs to the LDH/MDH superfamily. MDH type 1 family. In terms of assembly, homodimer.

The catalysed reaction is (S)-malate + NAD(+) = oxaloacetate + NADH + H(+). Functionally, catalyzes the reversible oxidation of malate to oxaloacetate. The protein is Malate dehydrogenase of Aeromonas salmonicida (strain A449).